Here is a 268-residue protein sequence, read N- to C-terminus: Glycine/sarcosine N-methyltransferase (268 aa).

Residues Y26, W34, R43, A67, D88, 114-115 (DW), and L132 contribute to the S-adenosyl-L-methionine site. Residues N134, R167, and Y206 each coordinate substrate.

Belongs to the class I-like SAM-binding methyltransferase superfamily. Glycine N-methyltransferase family. Monomer.

It carries out the reaction glycine + 2 S-adenosyl-L-methionine = N,N-dimethylglycine + 2 S-adenosyl-L-homocysteine + 2 H(+). It catalyses the reaction glycine + S-adenosyl-L-methionine = sarcosine + S-adenosyl-L-homocysteine + H(+). The enzyme catalyses sarcosine + S-adenosyl-L-methionine = N,N-dimethylglycine + S-adenosyl-L-homocysteine + H(+). It participates in amine and polyamine biosynthesis; betaine biosynthesis via glycine pathway; betaine from glycine: step 1/3. Its pathway is amine and polyamine biosynthesis; betaine biosynthesis via glycine pathway; betaine from glycine: step 2/3. Its activity is regulated as follows. p-chloromercuribenzoic acid inhibits more than 95% of the GSMT activities on glycine and sarcosine, and S-adenosylhomocysteine (AdoHcy) inhibits completely GSMT activities. Its function is as follows. Catalyzes the methylation of glycine and sarcosine to sarcosine and dimethylglycine, respectively, with S-adenosylmethionine (AdoMet) acting as the methyl donor. It has strict specificity for glycine and sarcosine as the methyl group acceptors. The chain is Glycine/sarcosine N-methyltransferase from Halorhodospira halochloris (Ectothiorhodospira halochloris).